A 183-amino-acid chain; its full sequence is Caspase recruitment domain-containing protein 19 (183 aa).

A disulfide bridge connects residues C7 and C77. A CARD domain is found at 8–99 (DRLVQDTPFL…PLHSHLPSRY (92 aa)). Residues 122–142 (GPMSFLAGLGLAAGLALLLYC) traverse the membrane as a helical segment.

As to quaternary structure, associates with BCL10 by CARD-CARD interaction.

Its subcellular location is the endoplasmic reticulum membrane. It is found in the mitochondrion membrane. Functionally, plays a role in inhibiting the effects of BCL10-induced activation of NF-kappa-B. The chain is Caspase recruitment domain-containing protein 19 from Mus musculus (Mouse).